The sequence spans 308 residues: PAK4-inhibitor inka1 (308 aa).

Positions 81–105 (EEEESASDPSAVSSPSSERSLEFDS) are disordered. Over residues 87 to 98 (SDPSAVSSPSSE) the composition is skewed to low complexity. 2 inka box regions span residues 164–201 (DPED…DLPE) and 281–308 (DTDY…IGYI).

The protein belongs to the INKA family. As to quaternary structure, interacts with pak4/pak5.

It localises to the nucleus. The protein resides in the cytoplasm. Its function is as follows. Inhibitor of the serine/threonine-protein kinase pak4/pak5. Acts by binding pak4/pak5 in a substrate-like manner, inhibiting the protein kinase activity. Required for the proper migration of neural crest cells during embryonic development, probably by inhibiting pak4/pak5. The chain is PAK4-inhibitor inka1 from Danio rerio (Zebrafish).